The sequence spans 201 residues: Small ribosomal subunit protein uS4c (201 aa).

Positions 89–157 (MRLDNILFRL…VQNYIASSDP (69 aa)) constitute an S4 RNA-binding domain.

It belongs to the universal ribosomal protein uS4 family. In terms of assembly, part of the 30S ribosomal subunit. Contacts protein S5. The interaction surface between S4 and S5 is involved in control of translational fidelity.

It localises to the plastid. The protein resides in the chloroplast. One of the primary rRNA binding proteins, it binds directly to 16S rRNA where it nucleates assembly of the body of the 30S subunit. Its function is as follows. With S5 and S12 plays an important role in translational accuracy. This Triticum aestivum (Wheat) protein is Small ribosomal subunit protein uS4c (rps4).